A 283-amino-acid polypeptide reads, in one-letter code: ATP synthase gamma chain (283 aa).

It belongs to the ATPase gamma chain family. In terms of assembly, F-type ATPases have 2 components, CF(1) - the catalytic core - and CF(0) - the membrane proton channel. CF(1) has five subunits: alpha(3), beta(3), gamma(1), delta(1), epsilon(1). CF(0) has three main subunits: a, b and c.

It localises to the cell membrane. Its function is as follows. Produces ATP from ADP in the presence of a proton gradient across the membrane. The gamma chain is believed to be important in regulating ATPase activity and the flow of protons through the CF(0) complex. This Clostridium beijerinckii (strain ATCC 51743 / NCIMB 8052) (Clostridium acetobutylicum) protein is ATP synthase gamma chain.